Reading from the N-terminus, the 309-residue chain is MSSSAKKQTLFISTLIISWYSSNIGVLLLNKFLLSNYGFKFPIFLTMCHMSACAILSYISIVFLKLVPLQHLKSRSQFLKVATLSIVFCASVVGGNISLRYLPVSFNQAVGATTPFFTALFAYLMTFKREAWVTYGALVPVVAGVVIASGGEPGFHWFGFIMCISATAARAFKSVLQGILLSSEGEKLNSMNLMLYMSPIAVIALLPVTLFMEPDVISVTLTLAKQHQYMWILLLVNSVMAYSANLLNFLVTKHTSALTLQVLGNAKGAVAVVISILIFQNPVTVMGIGGYSITVLGVVAYGETKRRFR.

A run of 10 helical transmembrane segments spans residues 9–29 (TLFI…VLLL), 43–63 (IFLT…SIVF), 78–98 (FLKV…GNIS), 104–124 (VSFN…FAYL), 131–151 (AWVT…ASGG), 152–172 (EPGF…ARAF), 193–213 (LMLY…LFME), 231–251 (WILL…NFLV), 256–278 (SALT…SILI), and 283–302 (VTVM…VAYG).

The protein belongs to the TPT transporter family. TPT (TC 2.A.7.9) subfamily. Ubiquitous.

Its subcellular location is the golgi apparatus membrane. UDP-glucuronic acid transporter that modulates the polysaccharide composition of seed mucilage. Transports UDP-glucuronic acid (UDP-GlcA) and UDP-galacturonic acid (UDP-GalA) in vitro. The chain is UDP-URONIC ACID TRANSPORTER 1 from Arabidopsis thaliana (Mouse-ear cress).